A 368-amino-acid chain; its full sequence is Histidinol dehydrogenase (368 aa).

Substrate-binding residues include Thr-197, Gln-218, and His-221. Zn(2+) is bound by residues Gln-218 and His-221. Active-site proton acceptor residues include Glu-276 and His-277. Residues His-277, Asp-306, Glu-358, and His-363 each contribute to the substrate site. Zn(2+) is bound at residue Asp-306. His-363 contacts Zn(2+).

It belongs to the histidinol dehydrogenase family. The cofactor is Zn(2+).

The catalysed reaction is L-histidinol + 2 NAD(+) + H2O = L-histidine + 2 NADH + 3 H(+). It functions in the pathway amino-acid biosynthesis; L-histidine biosynthesis; L-histidine from 5-phospho-alpha-D-ribose 1-diphosphate: step 9/9. Its function is as follows. Catalyzes the sequential NAD-dependent oxidations of L-histidinol to L-histidinaldehyde and then to L-histidine. This Pyrobaculum aerophilum (strain ATCC 51768 / DSM 7523 / JCM 9630 / CIP 104966 / NBRC 100827 / IM2) protein is Histidinol dehydrogenase.